The sequence spans 808 residues: Sucrose synthase 1 (808 aa).

A GT-B glycosyltransferase region spans residues 277–754 (MVFNVVILSP…GLQRIEEKYT (478 aa)).

It belongs to the glycosyltransferase 1 family. Plant sucrose synthase subfamily. As to quaternary structure, homotetramer. In terms of tissue distribution, expressed in the phloem of leaves and in roots. Detected in the whole plant but more precisely confined to the vasculature in cotyledons, mature leaves and siliques.

The catalysed reaction is an NDP-alpha-D-glucose + D-fructose = a ribonucleoside 5'-diphosphate + sucrose + H(+). Functionally, sucrose-cleaving enzyme that provides UDP-glucose and fructose for various metabolic pathways. This is Sucrose synthase 1 (SUS1) from Arabidopsis thaliana (Mouse-ear cress).